The primary structure comprises 389 residues: Apicidin F cluster transcription factor apf2 (389 aa).

Polar residues-rich tracts occupy residues 1-13 (MSPP…TITD) and 75-84 (PDSATPKPSL). Disordered stretches follow at residues 1 to 27 (MSPP…VAQR), 65 to 84 (PQSV…KPSL), and 219 to 239 (EVPN…TKQP). The basic DNA-binding region stretch occupies residues 12-38 (TDANERRKAQNRVAQRNYRSRQKLRVE). ANK repeat units follow at residues 241 to 270 (EFKT…NIDT), 274 to 303 (HGRT…DLLM), 307 to 336 (SGVT…QQDR), and 357 to 386 (QNMT…DVNI).

Belongs to the bZIP family. Highly divergent.

It is found in the nucleus. In terms of biological role, transcription factor that regulates the expression of the gene cluster that mediates the biosynthesis of apicidin F. Binds to the eight-base-pair motif 5'-TGACGTGA-3' called the 'Api-box' that is found in all promoters of the apicidin F cluster except in the promoter region of apf2 itself. This is Apicidin F cluster transcription factor apf2 from Gibberella fujikuroi (strain CBS 195.34 / IMI 58289 / NRRL A-6831) (Bakanae and foot rot disease fungus).